Consider the following 159-residue polypeptide: U1 small nuclear ribonucleoprotein C (159 aa).

The segment at 4–36 (FYCDYCDTYLTHDSPSVRKTHCSGRKHKENVKD) adopts a Matrin-type zinc-finger fold. Disordered regions lie at residues 63-95 (PPTPFAAPPAGSAMIPPPPSLGGPPRPGMMPAP) and 139-159 (MRPPTRPMMLQSRPGMARPDR). Pro residues predominate over residues 77–95 (IPPPPSLGGPPRPGMMPAP).

This sequence belongs to the U1 small nuclear ribonucleoprotein C family. As to quaternary structure, component of the U1 snRNP. The U1 snRNP is composed of the U1 snRNA and the 7 core Sm proteins snrpb, snrpd1, snrpd2, snrpd3, snrpe, snrpf and snrpg that assemble in a heptameric protein ring on the Sm site of the small nuclear RNA to form the core snRNP, and at least 3 U1 snRNP-specific proteins snrnp70/U1-70K, snrpa/U1-A and snrpc/U1-C. snrpc/U1-C interacts with U1 snRNA and the 5' splice-site region of the pre-mRNA.

Its subcellular location is the nucleus. Functionally, component of the spliceosomal U1 snRNP, which is essential for recognition of the pre-mRNA 5' splice-site and the subsequent assembly of the spliceosome. SNRPC/U1-C is directly involved in initial 5' splice-site recognition for both constitutive and regulated alternative splicing. The interaction with the 5' splice-site seems to precede base-pairing between the pre-mRNA and the U1 snRNA. Stimulates commitment or early (E) complex formation by stabilizing the base pairing of the 5' end of the U1 snRNA and the 5' splice-site region. In Xenopus laevis (African clawed frog), this protein is U1 small nuclear ribonucleoprotein C.